The sequence spans 668 residues: DNA ligase (668 aa).

NAD(+) is bound by residues Asp32 to Asp36, Ser81 to Leu82, and Glu110. The active-site N6-AMP-lysine intermediate is Lys112. Residues Arg133, Glu167, Lys283, and Lys307 each coordinate NAD(+). Zn(2+) is bound by residues Cys401, Cys404, Cys419, and Cys424. Residues Gln586–Lys668 form the BRCT domain.

Belongs to the NAD-dependent DNA ligase family. LigA subfamily. The cofactor is Mg(2+). Requires Mn(2+) as cofactor.

The enzyme catalyses NAD(+) + (deoxyribonucleotide)n-3'-hydroxyl + 5'-phospho-(deoxyribonucleotide)m = (deoxyribonucleotide)n+m + AMP + beta-nicotinamide D-nucleotide.. Its function is as follows. DNA ligase that catalyzes the formation of phosphodiester linkages between 5'-phosphoryl and 3'-hydroxyl groups in double-stranded DNA using NAD as a coenzyme and as the energy source for the reaction. It is essential for DNA replication and repair of damaged DNA. The sequence is that of DNA ligase from Staphylococcus carnosus (strain TM300).